The primary structure comprises 688 residues: Zinc finger CCCH domain-containing protein 22 (688 aa).

Positions 62 to 123 (ALLPPPPPPS…QPFSRSNGSV (62 aa)) are disordered. Low complexity predominate over residues 101-117 (PLSASSPSSWAQAQPFS). The C3H1-type zinc finger occupies 233-260 (GFGWKPCLYYARGFCKNGSSCRFVHGDD). The region spanning 366-442 (RQIYLTFPAD…RVLVKPYKEK (77 aa)) is the RRM domain. A coiled-coil region spans residues 487 to 522 (TNEMMLRRKLEEQQQAAELQQAIELHSRRLMDLQLL). The tract at residues 552 to 624 (LATTMVESPP…PTKSSVSAHQ (73 aa)) is disordered. A compositionally biased stretch (basic and acidic residues) spans 574-589 (TEERKMVNGGGDKEES). Over residues 613–624 (ASPTKSSVSAHQ) the composition is skewed to polar residues.

The polypeptide is Zinc finger CCCH domain-containing protein 22 (Oryza sativa subsp. japonica (Rice)).